The chain runs to 421 residues: Imidazolonepropionase (421 aa).

The Fe(3+) site is built by His-81 and His-83. Zn(2+) is bound by residues His-81 and His-83. 3 residues coordinate 4-imidazolone-5-propanoate: Arg-90, Tyr-153, and His-186. Residue Tyr-153 participates in N-formimidoyl-L-glutamate binding. Residue His-251 participates in Fe(3+) binding. His-251 provides a ligand contact to Zn(2+). 4-imidazolone-5-propanoate is bound at residue Glu-254. A Fe(3+)-binding site is contributed by Asp-326. Asp-326 lines the Zn(2+) pocket. N-formimidoyl-L-glutamate contacts are provided by Asn-328 and Gly-330. Position 331 (Ser-331) interacts with 4-imidazolone-5-propanoate.

This sequence belongs to the metallo-dependent hydrolases superfamily. HutI family. Zn(2+) serves as cofactor. It depends on Fe(3+) as a cofactor.

Its subcellular location is the cytoplasm. It carries out the reaction 4-imidazolone-5-propanoate + H2O = N-formimidoyl-L-glutamate. The protein operates within amino-acid degradation; L-histidine degradation into L-glutamate; N-formimidoyl-L-glutamate from L-histidine: step 3/3. In terms of biological role, catalyzes the hydrolytic cleavage of the carbon-nitrogen bond in imidazolone-5-propanoate to yield N-formimidoyl-L-glutamate. It is the third step in the universal histidine degradation pathway. This chain is Imidazolonepropionase, found in Streptococcus pyogenes serotype M6 (strain ATCC BAA-946 / MGAS10394).